The sequence spans 263 residues: Putative hydro-lyase BPUM_0381 (263 aa).

The protein belongs to the D-glutamate cyclase family.

The protein is Putative hydro-lyase BPUM_0381 of Bacillus pumilus (strain SAFR-032).